The following is a 173-amino-acid chain: MLNRRNGYEYEDLLACARGEMFGPGNAQLPLPPMLMFDRITDINDNGGEFGKGLVRAELDVKPDLWFFGCHFKNDPVMPGCLGLDALWQMVGFYLGWSGGEGRGRALGLNELKFSGQVLPEARKVVYNVDIKRVMRAKLVLGIADGWLSVDDQIIYRAKDLKVGLFKQGTSLG.

Histidine 71 is a catalytic residue.

It belongs to the thioester dehydratase family. FabA subfamily. Homodimer.

The protein localises to the cytoplasm. The enzyme catalyses a (3R)-hydroxyacyl-[ACP] = a (2E)-enoyl-[ACP] + H2O. It catalyses the reaction (3R)-hydroxydecanoyl-[ACP] = (2E)-decenoyl-[ACP] + H2O. The catalysed reaction is (2E)-decenoyl-[ACP] = (3Z)-decenoyl-[ACP]. It participates in lipid metabolism; fatty acid biosynthesis. In terms of biological role, necessary for the introduction of cis unsaturation into fatty acids. Catalyzes the dehydration of (3R)-3-hydroxydecanoyl-ACP to E-(2)-decenoyl-ACP and then its isomerization to Z-(3)-decenoyl-ACP. Can catalyze the dehydratase reaction for beta-hydroxyacyl-ACPs with saturated chain lengths up to 16:0, being most active on intermediate chain length. The sequence is that of 3-hydroxydecanoyl-[acyl-carrier-protein] dehydratase from Bradyrhizobium diazoefficiens (strain JCM 10833 / BCRC 13528 / IAM 13628 / NBRC 14792 / USDA 110).